We begin with the raw amino-acid sequence, 199 residues long: Charged multivesicular body protein 1b (199 aa).

Coiled coils occupy residues 15–42 (AKEL…AIQK) and 178–199 (TSVA…RDQV). Positions 167 to 199 (ELPQGQTGSVGTSVASTEQDELSQRLARLRDQV) are disordered. Over residues 170 to 183 (QGQTGSVGTSVAST) the composition is skewed to polar residues. The short motif at 186 to 196 (DELSQRLARLR) is the MIT-interacting motif element.

Belongs to the SNF7 family.

It is found in the cytoplasm. Its subcellular location is the cytosol. The protein resides in the endosome. It localises to the late endosome membrane. In terms of biological role, probable peripherally associated component of the endosomal sorting required for transport complex III (ESCRT-III) which is involved in multivesicular bodies (MVBs) formation and sorting of endosomal cargo proteins into MVBs. MVBs contain intraluminal vesicles (ILVs) that are generated by invagination and scission from the limiting membrane of the endosome and mostly are delivered to lysosomes enabling degradation of membrane proteins, such as stimulated growth factor receptors, lysosomal enzymes and lipids. In Xenopus tropicalis (Western clawed frog), this protein is Charged multivesicular body protein 1b (chmp1b).